Here is a 37-residue protein sequence, read N- to C-terminus: MKVKPSVKKICDKCKVIRRHGRVMVICDNLRHKQRQG.

Belongs to the bacterial ribosomal protein bL36 family.

In Streptomyces griseus subsp. griseus (strain JCM 4626 / CBS 651.72 / NBRC 13350 / KCC S-0626 / ISP 5235), this protein is Large ribosomal subunit protein bL36.